The primary structure comprises 106 residues: DNA-directed RNA polymerase subunit omega (106 aa).

Positions 76–106 (REPAREAAEPAGEAPEEQQRAAGEREDQGAA) are disordered. Over residues 92–106 (EQQRAAGEREDQGAA) the composition is skewed to basic and acidic residues.

Belongs to the RNA polymerase subunit omega family. As to quaternary structure, the RNAP catalytic core consists of 2 alpha, 1 beta, 1 beta' and 1 omega subunit. When a sigma factor is associated with the core the holoenzyme is formed, which can initiate transcription.

It catalyses the reaction RNA(n) + a ribonucleoside 5'-triphosphate = RNA(n+1) + diphosphate. Promotes RNA polymerase assembly. Latches the N- and C-terminal regions of the beta' subunit thereby facilitating its interaction with the beta and alpha subunits. In Rubrobacter xylanophilus (strain DSM 9941 / JCM 11954 / NBRC 16129 / PRD-1), this protein is DNA-directed RNA polymerase subunit omega.